A 90-amino-acid chain; its full sequence is Cell division topological specificity factor (90 aa).

This sequence belongs to the MinE family.

Its function is as follows. Prevents the cell division inhibition by proteins MinC and MinD at internal division sites while permitting inhibition at polar sites. This ensures cell division at the proper site by restricting the formation of a division septum at the midpoint of the long axis of the cell. The polypeptide is Cell division topological specificity factor (Pelotomaculum thermopropionicum (strain DSM 13744 / JCM 10971 / SI)).